A 79-amino-acid polypeptide reads, in one-letter code: Cytochrome c oxidase assembly factor 6 homolog (79 aa).

Positions 9–52 (RQACWGARDEYWKCLDENTEDASKCKKLRSSFESSCPQQWIKYF) constitute a CHCH domain. The short motif at 12–22 (CWGARDEYWKC) is the Cx9C motif element. 2 disulfide bridges follow: cysteine 12-cysteine 44 and cysteine 22-cysteine 33. Residues 33-44 (CKKLRSSFESSC) carry the Cx10C motif motif.

This sequence belongs to the cytochrome c oxidase subunit 6B family. In terms of assembly, found in a complex with TMEM177, COX20, MT-CO2/COX2, COX18, SCO1 and SCO2. Interacts with COA1, MT-CO2/COX2, SCO1, SCO2 and COX20. Interacts with COX20 in a MT-CO2/COX2- and COX18-dependent manner. Interacts with COX16.

The protein localises to the mitochondrion intermembrane space. Involved in the maturation of the mitochondrial respiratory chain complex IV subunit MT-CO2/COX2. Thereby, may regulate early steps of complex IV assembly. Mitochondrial respiratory chain complex IV or cytochrome c oxidase is the component of the respiratory chain that catalyzes the transfer of electrons from intermembrane space cytochrome c to molecular oxygen in the matrix and as a consequence contributes to the proton gradient involved in mitochondrial ATP synthesis. May also be required for efficient formation of respiratory supercomplexes comprised of complexes III and IV. The chain is Cytochrome c oxidase assembly factor 6 homolog (COA6) from Bos taurus (Bovine).